Reading from the N-terminus, the 127-residue chain is V-type proton ATPase subunit F (127 aa).

It belongs to the V-ATPase F subunit family. In terms of assembly, V-ATPase is a heteromultimeric enzyme made up of two complexes: the ATP-hydrolytic V1 complex and the proton translocation V0 complex. The V1 complex consists of three catalytic AB heterodimers that form a heterohexamer, three peripheral stalks each consisting of EG heterodimers, one central rotor including subunits D and F, and the regulatory subunits C and H. The proton translocation complex V0 consists of the proton transport subunit a, a ring of proteolipid subunits c9c'', rotary subunit d, subunits e and f, and the accessory subunits VhaAC45 and ATP6AP2.

Subunit of the V1 complex of vacuolar(H+)-ATPase (V-ATPase), a multisubunit enzyme composed of a peripheral complex (V1) that hydrolyzes ATP and a membrane integral complex (V0) that translocates protons. V-ATPase is responsible for acidifying and maintaining the pH of intracellular compartments and in some cell types, is targeted to the plasma membrane, where it is responsible for acidifying the extracellular environment. The chain is V-type proton ATPase subunit F (Vha14) from Anopheles gambiae (African malaria mosquito).